The sequence spans 1205 residues: A disintegrin and metalloproteinase with thrombospondin motifs 2 (1205 aa).

An N-terminal signal peptide occupies residues 1–28; it reads MDPPAGAAGRLLCPALLLLLLLPLPADA. Residues 29–253 constitute a propeptide that is removed on maturation; that stretch reads RLAAAAADPP…VNSSRRRMRR (225 aa). N-linked (GlcNAc...) asparagine glycosylation is found at N104 and N245. In terms of domain architecture, Peptidase M12B spans 260-464; it reads YNIEVLLGVD…HSYDCLRDDP (205 aa). Disulfide bonds link C337-C386, C380-C459, C419-C445, C486-C511, C497-C520, C506-C539, C533-C544, C567-C604, C571-C609, and C582-C594. H402 is a binding site for Zn(2+). E403 is a catalytic residue. 2 residues coordinate Zn(2+): H406 and H412. Residues 474 to 554 enclose the Disintegrin domain; the sequence is QLPGLHYSMN…IWLTPDILKR (81 aa). One can recognise a TSP type-1 1 domain in the interval 555 to 610; the sequence is DGNWGAWSPFGSCSRTCGTGVKFRTRQCDNPHPANGGRTCSGLAYDFQLCNSQDCP. Residues 685–687 carry the Cell attachment site motif; the sequence is RGD. Residues 717–845 form a spacer region; the sequence is KVVKGTFSRS…NVDDNNVLED (129 aa). 3 consecutive TSP type-1 domains span residues 848–906, 908–968, and 969–1023; these read VGYE…NPQE, SQPV…NREL, and CPGR…GPCP. N-linked (GlcNAc...) asparagine glycosylation is found at N942, N943, and N987. 3 cysteine pairs are disulfide-bonded: C981/C1017, C985/C1022, and C996/C1006. N1025 carries an N-linked (GlcNAc...) asparagine glycan. Residues 1053 to 1091 enclose the PLAC domain; the sequence is SKGRCQGDKSVFCRMEVLSRYCSIPGYNKLCCKSCNPHD. N1092, N1139, and N1144 each carry an N-linked (GlcNAc...) asparagine glycan. Positions 1163–1184 are disordered; the sequence is GLEDEVQPPNLIPRRPSPYEKT.

As to quaternary structure, may belong to a multimeric complex. Binds specifically to collagen type XIV. The cofactor is Zn(2+). The N-terminus is blocked. In terms of processing, the precursor is cleaved by a furin endopeptidase. Post-translationally, glycosylated. Can be O-fucosylated by POFUT2 on a serine or a threonine residue found within the consensus sequence C1-X(2)-(S/T)-C2-G of the TSP type-1 repeat domains where C1 and C2 are the first and second cysteine residue of the repeat, respectively. Fucosylated repeats can then be further glycosylated by the addition of a beta-1,3-glucose residue by the glucosyltransferase, B3GALTL. Fucosylation mediates the efficient secretion of ADAMTS family members. Can also be C-glycosylated with one or two mannose molecules on tryptophan residues within the consensus sequence W-X-X-W of the TPRs, and N-glycosylated. These other glycosylations can also facilitate secretion. In terms of tissue distribution, enzymatic activity is detected at high level in all type I collagen-rich tissues such as skin, bones, tendons and aorta and at low level in brain and thymus. The mRNA levels were disproportionately high in heart, liver, retina and muscle.

It is found in the secreted. Its subcellular location is the extracellular space. The protein resides in the extracellular matrix. The enzyme catalyses Cleaves the N-propeptide of collagen chain alpha1(I) at Pro-|-Gln and of alpha1(II) and alpha2(I) at Ala-|-Gln.. Functionally, cleaves the propeptides of type I and II collagen prior to fibril assembly. Does not act on type III collagen. Cleaves lysyl oxidase LOX at a site downstream of its propeptide cleavage site to produce a short LOX form with reduced collagen-binding activity. The protein is A disintegrin and metalloproteinase with thrombospondin motifs 2 (ADAMTS2) of Bos taurus (Bovine).